The chain runs to 264 residues: Thymidylate synthase (264 aa).

R21 is a binding site for dUMP. H51 contacts (6R)-5,10-methylene-5,6,7,8-tetrahydrofolate. Position 126-127 (126-127 (RR)) interacts with dUMP. The active-site Nucleophile is the C146. DUMP contacts are provided by residues 166-169 (RSAD), N177, and 207-209 (HIY). Residue D169 participates in (6R)-5,10-methylene-5,6,7,8-tetrahydrofolate binding. A263 is a (6R)-5,10-methylene-5,6,7,8-tetrahydrofolate binding site.

Belongs to the thymidylate synthase family. Bacterial-type ThyA subfamily. Homodimer.

It localises to the cytoplasm. It catalyses the reaction dUMP + (6R)-5,10-methylene-5,6,7,8-tetrahydrofolate = 7,8-dihydrofolate + dTMP. Its pathway is pyrimidine metabolism; dTTP biosynthesis. Its function is as follows. Catalyzes the reductive methylation of 2'-deoxyuridine-5'-monophosphate (dUMP) to 2'-deoxythymidine-5'-monophosphate (dTMP) while utilizing 5,10-methylenetetrahydrofolate (mTHF) as the methyl donor and reductant in the reaction, yielding dihydrofolate (DHF) as a by-product. This enzymatic reaction provides an intracellular de novo source of dTMP, an essential precursor for DNA biosynthesis. This chain is Thymidylate synthase, found in Brucella anthropi (strain ATCC 49188 / DSM 6882 / CCUG 24695 / JCM 21032 / LMG 3331 / NBRC 15819 / NCTC 12168 / Alc 37) (Ochrobactrum anthropi).